The primary structure comprises 296 residues: Nucleotide-binding protein SPJ_1472 (296 aa).

13 to 20 (GMSGAGKT) contributes to the ATP binding site. Position 63-66 (63-66 (DMRS)) interacts with GTP.

This sequence belongs to the RapZ-like family.

Its function is as follows. Displays ATPase and GTPase activities. This is Nucleotide-binding protein SPJ_1472 from Streptococcus pneumoniae (strain JJA).